The following is a 215-amino-acid chain: Guanylate kinase (215 aa).

Residues 11 to 189 (GNVFMVVAPS…ALTELVQIIS (179 aa)) enclose the Guanylate kinase-like domain. 18–25 (APSGAGKS) contacts ATP.

It belongs to the guanylate kinase family.

Its subcellular location is the cytoplasm. The catalysed reaction is GMP + ATP = GDP + ADP. Essential for recycling GMP and indirectly, cGMP. In Bordetella bronchiseptica (strain ATCC BAA-588 / NCTC 13252 / RB50) (Alcaligenes bronchisepticus), this protein is Guanylate kinase.